We begin with the raw amino-acid sequence, 92 residues long: UPF0223 protein SUB0967 (92 aa).

This sequence belongs to the UPF0223 family.

This chain is UPF0223 protein SUB0967, found in Streptococcus uberis (strain ATCC BAA-854 / 0140J).